Consider the following 426-residue polypeptide: Adenylosuccinate synthetase 2 (426 aa).

GTP contacts are provided by residues 12–18 (GDEGKGK) and 40–42 (GHT). Aspartate 13 serves as the catalytic Proton acceptor. Residues aspartate 13 and glycine 40 each coordinate Mg(2+). IMP contacts are provided by residues 13-16 (DEGK), 38-41 (NAGH), arginine 147, asparagine 223, threonine 238, and arginine 302. Histidine 41 serves as the catalytic Proton donor. 298–304 (TNTGRRR) lines the substrate pocket. Residues arginine 304, 330-332 (KLD), and 412-414 (GVG) contribute to the GTP site.

The protein belongs to the adenylosuccinate synthetase family. As to quaternary structure, homodimer. The cofactor is Mg(2+).

The protein localises to the cytoplasm. The catalysed reaction is IMP + L-aspartate + GTP = N(6)-(1,2-dicarboxyethyl)-AMP + GDP + phosphate + 2 H(+). It functions in the pathway purine metabolism; AMP biosynthesis via de novo pathway; AMP from IMP: step 1/2. Functionally, plays an important role in the de novo pathway and in the salvage pathway of purine nucleotide biosynthesis. Catalyzes the first committed step in the biosynthesis of AMP from IMP. The chain is Adenylosuccinate synthetase 2 from Laccaria bicolor (strain S238N-H82 / ATCC MYA-4686) (Bicoloured deceiver).